Consider the following 1287-residue polypeptide: MAYKIRKINRNVERRDYTKVSMNLSLPNLIGIQTETFEWFKTKGIQEVLDEFFPILSFDGSSVLTLENWGFKEPRLSVRQAREESKIYDAPIYANLKLSVNKTEEIQKEFDGVDQEDTLKVLTHWLEEKTGNGNITFKQQSQNSYFFEITIKKSEKPDLIQIDIIEDKKTSLICNVSIYKSGEVFLGDFPLMTEAGTFIINGSQKVIVSQLVRSPGAYFNKELNRKTGEMIYFADIIPSRGTWLEYETDSKKIGSDAINPLYVKIDKSRKTTATSLLLAFGISKDDILNIFDNDEVLVETLQQDSIIGDFKIDWSNQVQEIYKKIRQGETATSEGASKFINSILFDKRKYDLTKAGRFKLKQKLSIKNRILNKVIAEDILDANNNVLIAKDTEVTKNNIQEISKILDQDVMSIDLKYLSDIPGNRKVQKIRVYKDSELKTDTTCLIGLTNSSNEEFITVADILSTVSYLLNLKYNIGEIDDIDNLGNRRVRTVGELLQNQFRMGLNRIDKNVKEKLATSDLYKVKTSTIINAKPLTAIIGEFFNLSQLSQFMDQINPLSELTNKRRLTALGPGGLSRDRAGLEVRDVHPSHYGRICPIETPEGPNIGLINNLSTYARVNEYGFITTPYRKVINGIIQNDQVEYLTADQEKNFIIAQSNVNQDENGKILDEIIVSRFNGDDYMAKVEEIHYIDVSPKQIVSVATSGIPFLENDDANRALMGANMQRQAVPLIKPESPIVATGIEFEAARDSGEAIVAKEDAIVKYVDSKTIITDGESGIRTYILSDYERSNNGTSLTQSPIVKVGDVVKKGEIIADGPSMDQGELAIGQNVVVAFSTYNGYNFEDAIVMSERIVIDDRFTSIHIDEYTLEVRNTKQGQEEVTREIPNMSEQAKRHLDAEGIVAIGTEVKVGDVLVGKVTPKGQVQLSPEDKLLHAIFGEKSRNVKDNSLRVPNGGEGIVQSIKRFKAKSALNPDGIELPADIIEVIKVYVVQKRKIQEGDKMSGRHGNKGIISRILPIEDMPHLEDGTPVDIILNPQGVPSRMNIGQILEIHLGMAAKKLNQKVITPVFEGLNEKELEEIMAEAGMTNYGKVTLIDGQTGEPFDKPIAVGVMYMLKLSHMVDDKIHARNVGPYSLITQQPLGGKAQNGGQRFGEMEVWALEAYGAAHTLREILTIKSDDIKGRSKTYEAIVRSKRIPEPGIPESFNVLSKEIMGLGFNMYMIDETGEKSAINAYDKKDFEIDNYDDEILIKTDNLYIDDQDVDAEFEDLTYVDENDILNSFELDNEEE.

This sequence belongs to the RNA polymerase beta chain family. The RNAP catalytic core consists of 2 alpha, 1 beta, 1 beta' and 1 omega subunit. When a sigma factor is associated with the core the holoenzyme is formed, which can initiate transcription.

It catalyses the reaction RNA(n) + a ribonucleoside 5'-triphosphate = RNA(n+1) + diphosphate. In terms of biological role, DNA-dependent RNA polymerase catalyzes the transcription of DNA into RNA using the four ribonucleoside triphosphates as substrates. The protein is DNA-directed RNA polymerase subunit beta of Mycoplasma capricolum subsp. capricolum (strain California kid / ATCC 27343 / NCTC 10154).